Reading from the N-terminus, the 839-residue chain is Toll-like receptor 4 (839 aa).

A signal peptide spans methionine 1–proline 23. The Extracellular segment spans residues glutamate 24–lysine 631. An intrachain disulfide couples cysteine 29 to cysteine 40. An N-linked (GlcNAc...) asparagine glycan is attached at asparagine 35. 5 LRR repeats span residues serine 55 to serine 76, glutamate 79 to serine 100, histidine 103 to glycine 124, serine 127 to histidine 148, and threonine 151 to serine 172. A glycan (N-linked (GlcNAc...) asparagine) is linked at asparagine 173. 3 LRR repeats span residues asparagine 176–histidine 199, asparagine 205–glutamate 225, and arginine 227–isoleucine 247. Residue asparagine 205 is glycosylated (N-linked (GlcNAc...) asparagine). Cysteine 281 and cysteine 306 are oxidised to a cystine. Asparagine 282 and asparagine 309 each carry an N-linked (GlcNAc...) asparagine glycan. LRR repeat units follow at residues glycine 331 to lysine 351, serine 352 to proline 373, serine 374 to serine 394, serine 400 to glutamate 422, glutamine 423 to leucine 444, asparagine 448 to histidine 456, serine 472 to leucine 495, asparagine 497 to serine 518, serine 521 to cysteine 542, and serine 545 to glutamine 565. A disulfide bridge links cysteine 390 with cysteine 391. Asparagine 497 and asparagine 526 each carry an N-linked (GlcNAc...) asparagine glycan. Asparagine 575 carries N-linked (GlcNAc...) asparagine glycosylation. One can recognise an LRRCT domain in the interval asparagine 579–methionine 629. 2 disulfide bridges follow: cysteine 583–cysteine 609 and cysteine 585–cysteine 627. N-linked (GlcNAc...) asparagine glycosylation is found at asparagine 624 and asparagine 630. A helical transmembrane segment spans residues threonine 632 to tyrosine 652. The Cytoplasmic segment spans residues lysine 653–isoleucine 839. Positions asparagine 672–leucine 815 constitute a TIR domain.

It belongs to the Toll-like receptor family. In terms of assembly, belongs to the lipopolysaccharide (LPS) receptor, a multi-protein complex containing at least CD14, LY96 and TLR4. Binding to bacterial LPS leads to homodimerization. Interacts with LY96 via the extracellular domain. Interacts with MYD88 and TIRAP via their respective TIR domains. Interacts with NOX4. Interacts with CNPY3 and HSP90B1; this interaction is required for proper folding in the endoplasmic reticulum. Interacts with MAP3K21; this interaction leads to negative regulation of TLR4 signaling. Interacts with CD36, following CD36 stimulation by oxLDL or amyloid-beta 42, and forms a heterodimer with TLR6. The trimeric complex is internalized and triggers inflammatory response. LYN kinase activity facilitates TLR4-TLR6 heterodimerization and signal initiation. Interacts with TICAM1 in response to LPS in a WDFY1-dependent manner. Interacts with WDFY1 in response to LPS. Interacts with SMPDL3B. Interacts with CEACAM1; upon lipopolysaccharide stimulation, forms a complex including TLR4 and the phosphorylated form of SYK and CEACAM1, which in turn, recruits PTPN6 that dephosphorylates SYK, reducing the production of reactive oxygen species (ROS) and lysosome disruption, which in turn, reduces the activity of the inflammasome. Interacts with RFTN1; the interaction occurs in response to lipopolysaccharide stimulation. Interacts with SCIMP; the interaction occurs in response to lipopolysaccharide stimulation and is enhanced by phosphorylation of SCIMP by LYN. This interaction facilitates the phosphorylation of TLR4 by LYN which elicits a selective cytokine response in macrophages. Interacts with TRAF3IP3. Interacts with TREM1; this interaction enhances TLR4-mediated inflammatory response. Interacts with ZG16B/PAUF. Interacts with CD82; this interaction inhibits TLR4-mediated signaling pathway. In terms of processing, phosphorylated on tyrosine residues by LYN after binding lipopolysaccharide. Ubiquitinated by RNF128 via 'Lys-28'-linked polyubiquitin chains, leading to proteasomal degradation.

Its subcellular location is the cell membrane. It is found in the early endosome. The protein localises to the cell projection. The protein resides in the ruffle. Functionally, transmembrane receptor that functions as a pattern recognition receptor recognizing pathogen- and damage-associated molecular patterns (PAMPs and DAMPs) to induce innate immune responses via downstream signaling pathways. At the plasma membrane, cooperates with LY96 to mediate the innate immune response to bacterial lipopolysaccharide (LPS). Also involved in LPS-independent inflammatory responses triggered by free fatty acids, such as palmitate, and Ni(2+). Mechanistically, acts via MYD88, TIRAP and TRAF6, leading to NF-kappa-B activation, cytokine secretion and the inflammatory response. Alternatively, CD14-mediated TLR4 internalization via endocytosis is associated with the initiation of a MYD88-independent signaling via the TICAM1-TBK1-IRF3 axis leading to type I interferon production. In addition to the secretion of proinflammatory cytokines, initiates the activation of NLRP3 inflammasome and formation of a positive feedback loop between autophagy and NF-kappa-B signaling cascade. In complex with TLR6, promotes inflammation in monocytes/macrophages by associating with TLR6 and the receptor CD86. Upon ligand binding, such as oxLDL or amyloid-beta 42, the TLR4:TLR6 complex is internalized and triggers inflammatory response, leading to NF-kappa-B-dependent production of CXCL1, CXCL2 and CCL9 cytokines, via MYD88 signaling pathway, and CCL5 cytokine, via TICAM1 signaling pathway. In myeloid dendritic cells, vesicular stomatitis virus glycoprotein G but not LPS promotes the activation of IRF7, leading to type I IFN production in a CD14-dependent manner. This chain is Toll-like receptor 4 (TLR4), found in Pan paniscus (Pygmy chimpanzee).